The primary structure comprises 168 residues: MLSVETHAAAPWPDALDWAARAAEAVAAAFAITPFAALADAAPLVEVAVRLTDDAEVHTLNRDFRGRDKPTNVLSFPQVQNDLLESLANSDDGEILLGDIVLARETCAREADEKGVSLAAHATHLIVHGALHLVGYDHMDDVSAAAMEALEVKALASLGIANPYADQD.

Zn(2+) contacts are provided by His-128, His-132, and His-138.

The protein belongs to the endoribonuclease YbeY family. Zn(2+) serves as cofactor.

The protein localises to the cytoplasm. In terms of biological role, single strand-specific metallo-endoribonuclease involved in late-stage 70S ribosome quality control and in maturation of the 3' terminus of the 16S rRNA. The protein is Endoribonuclease YbeY of Sphingopyxis alaskensis (strain DSM 13593 / LMG 18877 / RB2256) (Sphingomonas alaskensis).